The sequence spans 68 residues: DNA gyrase inhibitor YacG (68 aa).

Residues C10, C13, C29, and C33 each contribute to the Zn(2+) site.

The protein belongs to the DNA gyrase inhibitor YacG family. As to quaternary structure, interacts with GyrB. It depends on Zn(2+) as a cofactor.

Inhibits all the catalytic activities of DNA gyrase by preventing its interaction with DNA. Acts by binding directly to the C-terminal domain of GyrB, which probably disrupts DNA binding by the gyrase. The chain is DNA gyrase inhibitor YacG from Haemophilus influenzae (strain PittGG).